We begin with the raw amino-acid sequence, 97 residues long: Antitoxin TacA2 (97 aa).

This sequence belongs to the TacA antitoxin family. As to quaternary structure, homodimer. Forms a complex with cognate toxin TacT2.

In terms of biological role, antitoxin component of a type II toxin-antitoxin (TA) system. Counteracts the toxic effect of cognate toxin TacT2. The TacA2-TacT2 complex both represses and derepresses expression of its own operon. The polypeptide is Antitoxin TacA2 (Salmonella enteritidis).